Reading from the N-terminus, the 325-residue chain is Probable 4-hydroxy-tetrahydrodipicolinate reductase 2, chloroplastic (325 aa).

Residues 1-32 constitute a chloroplast transit peptide; it reads MLSLRPPCTLSPAPWRRRRTLHGAAGTPQRVS. Residues 57-62, 149-151, and 172-175 contribute to the NAD(+) site; these read GCTGKM, GTT, and SPQM. The active-site Proton donor/acceptor is His208. Lys212 serves as the catalytic Proton donor. 217 to 218 provides a ligand contact to (S)-2,3,4,5-tetrahydrodipicolinate; that stretch reads GT.

This sequence belongs to the DapB family.

It localises to the plastid. It is found in the chloroplast. The enzyme catalyses (S)-2,3,4,5-tetrahydrodipicolinate + NAD(+) + H2O = (2S,4S)-4-hydroxy-2,3,4,5-tetrahydrodipicolinate + NADH + H(+). It carries out the reaction (S)-2,3,4,5-tetrahydrodipicolinate + NADP(+) + H2O = (2S,4S)-4-hydroxy-2,3,4,5-tetrahydrodipicolinate + NADPH + H(+). It participates in amino-acid biosynthesis; L-lysine biosynthesis via DAP pathway; (S)-tetrahydrodipicolinate from L-aspartate: step 4/4. Catalyzes the conversion of 4-hydroxy-tetrahydrodipicolinate (HTPA) to tetrahydrodipicolinate. The chain is Probable 4-hydroxy-tetrahydrodipicolinate reductase 2, chloroplastic (DAPB2) from Oryza sativa subsp. japonica (Rice).